A 446-amino-acid chain; its full sequence is Phosphoglucosamine mutase (446 aa).

The active-site Phosphoserine intermediate is S101. Mg(2+)-binding residues include S101, D240, D242, and D244. The residue at position 101 (S101) is a Phosphoserine.

This sequence belongs to the phosphohexose mutase family. It depends on Mg(2+) as a cofactor. In terms of processing, activated by phosphorylation.

It carries out the reaction alpha-D-glucosamine 1-phosphate = D-glucosamine 6-phosphate. Functionally, catalyzes the conversion of glucosamine-6-phosphate to glucosamine-1-phosphate. In Coxiella burnetii (strain CbuK_Q154) (Coxiella burnetii (strain Q154)), this protein is Phosphoglucosamine mutase.